The chain runs to 145 residues: D-aminoacyl-tRNA deacylase (145 aa).

The Gly-cisPro motif, important for rejection of L-amino acids signature appears at 137–138; it reads GP.

This sequence belongs to the DTD family. As to quaternary structure, homodimer.

It localises to the cytoplasm. It catalyses the reaction glycyl-tRNA(Ala) + H2O = tRNA(Ala) + glycine + H(+). It carries out the reaction a D-aminoacyl-tRNA + H2O = a tRNA + a D-alpha-amino acid + H(+). In terms of biological role, an aminoacyl-tRNA editing enzyme that deacylates mischarged D-aminoacyl-tRNAs. Also deacylates mischarged glycyl-tRNA(Ala), protecting cells against glycine mischarging by AlaRS. Acts via tRNA-based rather than protein-based catalysis; rejects L-amino acids rather than detecting D-amino acids in the active site. By recycling D-aminoacyl-tRNA to D-amino acids and free tRNA molecules, this enzyme counteracts the toxicity associated with the formation of D-aminoacyl-tRNA entities in vivo and helps enforce protein L-homochirality. The sequence is that of D-aminoacyl-tRNA deacylase from Shewanella halifaxensis (strain HAW-EB4).